Consider the following 433-residue polypeptide: Xylose isomerase (433 aa).

2 residues coordinate Mg(2+): Asp-305 and Asp-307.

The protein belongs to the xylose isomerase family. In terms of assembly, homotetramer. The cofactor is Mg(2+).

Its subcellular location is the cytoplasm. It catalyses the reaction alpha-D-xylose = alpha-D-xylulofuranose. This is Xylose isomerase from Cereibacter sphaeroides (strain KD131 / KCTC 12085) (Rhodobacter sphaeroides).